Reading from the N-terminus, the 447-residue chain is N-succinylarginine dihydrolase (447 aa).

Residues 19–28 (AGLSFGNEAS), asparagine 110, and 137–138 (HR) each bind substrate. Glutamate 174 is a catalytic residue. Residue arginine 212 coordinates substrate. Histidine 248 is a catalytic residue. The substrate site is built by aspartate 250 and asparagine 359. Cysteine 365 functions as the Nucleophile in the catalytic mechanism.

This sequence belongs to the succinylarginine dihydrolase family. As to quaternary structure, homodimer.

The enzyme catalyses N(2)-succinyl-L-arginine + 2 H2O + 2 H(+) = N(2)-succinyl-L-ornithine + 2 NH4(+) + CO2. It participates in amino-acid degradation; L-arginine degradation via AST pathway; L-glutamate and succinate from L-arginine: step 2/5. Functionally, catalyzes the hydrolysis of N(2)-succinylarginine into N(2)-succinylornithine, ammonia and CO(2). The polypeptide is N-succinylarginine dihydrolase (Salmonella schwarzengrund (strain CVM19633)).